The chain runs to 268 residues: Putative esterase/lipase 2 (268 aa).

Residue H29 is part of the active site. Residue S98 is the Charge relay system of the active site.

It belongs to the lipase/esterase LIP3/BchO family.

The chain is Putative esterase/lipase 2 from Mycoplasma genitalium (strain ATCC 33530 / DSM 19775 / NCTC 10195 / G37) (Mycoplasmoides genitalium).